Consider the following 432-residue polypeptide: Glutamine synthetase, chloroplastic (432 aa).

The region spanning 79 to 159 is the GS beta-grasp domain; it reads IIAEYIWIGG…VICDTYTPQG (81 aa). In terms of domain architecture, GS catalytic spans 166-432; that stretch reads KRHKAAQIFS…LAAQKLSLNV (267 aa).

The protein belongs to the glutamine synthetase family. As to quaternary structure, homooctamer.

It is found in the plastid. The protein resides in the chloroplast. It carries out the reaction L-glutamate + NH4(+) + ATP = L-glutamine + ADP + phosphate + H(+). Its function is as follows. The light-modulated chloroplast enzyme, encoded by a nuclear gene and expressed primarily in leaves, is responsible for the reassimilation of the ammonia generated by photorespiration. The chain is Glutamine synthetase, chloroplastic (GLN2) from Daucus carota (Wild carrot).